We begin with the raw amino-acid sequence, 350 residues long: Thioredoxin-like fold domain-containing protein MRL7L, chloroplastic (350 aa).

The N-terminal 48 residues, 1–48 (MILPFSTQFTCPVQDNGFSPSSLLSHCKRDRFEVTSLRYDSFGSVKTA), are a transit peptide targeting the chloroplast. Disordered regions lie at residues 78–107 (KKEE…LDDP) and 182–201 (NEKK…DSEK). 2 stretches are compositionally biased toward acidic residues: residues 82–93 (DSDSEDEEDEVK) and 186–200 (EEED…DDSE).

It localises to the plastid. The protein resides in the chloroplast stroma. The protein localises to the nucleus. In terms of biological role, plays an essential role in early steps of chloroplast development. Involved in the regulation of plastid gene expression. Required for the proper function of the plastid transcriptional machinery and protein accumulation in thylakoid membranes. May function as molecular chaperone to ensure proper organization of the nucleoids in chloroplasts. Is a necessary component of phytochrome signaling for photosynthesis-associated plastid-encoded genes (PhAPGs) activation. Mediates the degradation of two repressors of chloroplast biogenesis, PIF1 and PIF3 in nucleus. Promotes the assembly of the plastid-encoded RNA polymerase (PEP) complex for PhAPG transcription in plastids. This is Thioredoxin-like fold domain-containing protein MRL7L, chloroplastic from Arabidopsis thaliana (Mouse-ear cress).